The following is a 365-amino-acid chain: Phosphate acyltransferase (365 aa).

This sequence belongs to the PlsX family. As to quaternary structure, homodimer. Probably interacts with PlsY.

The protein resides in the cytoplasm. The enzyme catalyses a fatty acyl-[ACP] + phosphate = an acyl phosphate + holo-[ACP]. Its pathway is lipid metabolism; phospholipid metabolism. Catalyzes the reversible formation of acyl-phosphate (acyl-PO(4)) from acyl-[acyl-carrier-protein] (acyl-ACP). This enzyme utilizes acyl-ACP as fatty acyl donor, but not acyl-CoA. This is Phosphate acyltransferase from Klebsiella pneumoniae subsp. pneumoniae (strain ATCC 700721 / MGH 78578).